The primary structure comprises 202 residues: Protein lin-28 homolog A (202 aa).

Disordered regions lie at residues methionine 1–histidine 33 and serine 100–glycine 128. The span at glutamate 18–serine 29 shows a compositional bias: acidic residues. The CSD domain maps to histidine 33–proline 106. The flexible linker stretch occupies residues glycine 107 to arginine 130. CCHC-type zinc fingers lie at residues aspartate 129 to leucine 146 and lysine 151 to isoleucine 168. Residues cysteine 131, cysteine 134, histidine 139, cysteine 144, cysteine 153, cysteine 156, histidine 161, and cysteine 166 each contribute to the Zn(2+) site. The interval alanine 170–aspartate 202 is disordered. Polar residues predominate over residues glutamine 171–threonine 185. Serine 174 carries the post-translational modification Phosphoserine.

This sequence belongs to the lin-28 family. In terms of assembly, monomer.

It is found in the cytoplasm. The protein resides in the rough endoplasmic reticulum. The protein localises to the P-body. It localises to the stress granule. Its subcellular location is the nucleus. It is found in the nucleolus. RNA-binding protein that inhibits processing of pre-let-7 miRNAs and regulates translation of mRNAs that control developmental timing, pluripotency and metabolism. Seems to recognize a common structural G-quartet (G4) feature in its miRNA and mRNA targets. 'Translational enhancer' that drives specific mRNAs to polysomes and increases the efficiency of protein synthesis. Its association with the translational machinery and target mRNAs results in an increased number of initiation events per molecule of mRNA and, indirectly, in mRNA stabilization. Suppressor of microRNA (miRNA) biogenesis, including that of let-7. Binds specific target miRNA precursors (pre-miRNAs), recognizing an 5'-GGAG-3' motif found in their terminal loop, and recruits uridylyltransferase. This results in the terminal uridylation of target pre-miRNAs. Uridylated pre-miRNAs fail to be processed by Dicer and undergo degradation. Localized to the periendoplasmic reticulum area, binds to a large number of spliced mRNAs and inhibits the translation of mRNAs destined for the ER, reducing the synthesis of transmembrane proteins, ER or Golgi lumen proteins, and secretory proteins. Binds to and enhances the translation of mRNAs for several metabolic enzymes, increasing glycolysis and oxidative phosphorylation. Which, with the let-7 repression may enhance tissue repair in adult tissue. This Danio rerio (Zebrafish) protein is Protein lin-28 homolog A (lin28a).